A 325-amino-acid chain; its full sequence is NADH-quinone oxidoreductase subunit H (325 aa).

Helical transmembrane passes span 11–31 (ILLSILKAVVILLVVVTCGAF), 81–101 (VIFTLAPVIAFTSLLLAFAIV), 114–134 (IGILFFLMMAGLAVYAVLFAG), 154–174 (LSYEVFLGLSLMGVVAQAGSF), 186–206 (LWNVIPQFFGFVTFAIAGVAV), 237–257 (FFVGEYIGIVTVSALIVTLFF), 265–285 (LPPFIWFALKTAFFMMMFILI), and 304–324 (VCLPLTLVNLLVTAAVILWQA).

Belongs to the complex I subunit 1 family. NDH-1 is composed of 13 different subunits. Subunits NuoA, H, J, K, L, M, N constitute the membrane sector of the complex.

The protein resides in the cell inner membrane. The catalysed reaction is a quinone + NADH + 5 H(+)(in) = a quinol + NAD(+) + 4 H(+)(out). Its function is as follows. NDH-1 shuttles electrons from NADH, via FMN and iron-sulfur (Fe-S) centers, to quinones in the respiratory chain. The immediate electron acceptor for the enzyme in this species is believed to be ubiquinone. Couples the redox reaction to proton translocation (for every two electrons transferred, four hydrogen ions are translocated across the cytoplasmic membrane), and thus conserves the redox energy in a proton gradient. This subunit may bind ubiquinone. This is NADH-quinone oxidoreductase subunit H from Klebsiella pneumoniae (strain 342).